We begin with the raw amino-acid sequence, 111 residues long: Probable 4-amino-4-deoxy-L-arabinose-phosphoundecaprenol flippase subunit ArnE (111 aa).

Topologically, residues 1–35 are cytoplasmic; the sequence is MIWLTLVFASLLSVAGQLCQKQATCFAAVNKRRKH. Residues 36–56 traverse the membrane as a helical segment; the sequence is IVLWLGLALACLGLAMVLWLL. The 70-residue stretch at 40–109 folds into the EamA domain; that stretch reads LGLALACLGL…IIGGIVILGS (70 aa). The Periplasmic portion of the chain corresponds to 57–60; the sequence is VLQN. The chain crosses the membrane as a helical span at residues 61–81; the sequence is VPVGIAYPMLSLNFVWVTLAA. Topologically, residues 82–87 are cytoplasmic; sequence VKLWHE. Residues 88–108 form a helical membrane-spanning segment; it reads PVSLRHWCGLAFIIGGIVILG. Over 109-111 the chain is Periplasmic; sequence STV.

This sequence belongs to the ArnE family. Heterodimer of ArnE and ArnF.

It localises to the cell inner membrane. The protein operates within bacterial outer membrane biogenesis; lipopolysaccharide biosynthesis. Its function is as follows. Translocates 4-amino-4-deoxy-L-arabinose-phosphoundecaprenol (alpha-L-Ara4N-phosphoundecaprenol) from the cytoplasmic to the periplasmic side of the inner membrane. In Escherichia coli O81 (strain ED1a), this protein is Probable 4-amino-4-deoxy-L-arabinose-phosphoundecaprenol flippase subunit ArnE.